The primary structure comprises 204 residues: Tat proofreading chaperone DmsD (204 aa).

The protein belongs to the TorD/DmsD family. DmsD subfamily.

Functionally, required for biogenesis/assembly of DMSO reductase, but not for the interaction of the DmsA signal peptide with the Tat system. May be part of a chaperone cascade complex that facilitates a folding-maturation pathway for the substrate protein. The sequence is that of Tat proofreading chaperone DmsD from Salmonella typhi.